Consider the following 332-residue polypeptide: Polyprenyl transferase yanG (332 aa).

The next 8 membrane-spanning stretches (helical) occupy residues isoleucine 42 to alanine 62, valine 72 to valine 92, proline 145 to lysine 165, phenylalanine 170 to valine 190, alanine 200 to threonine 220, valine 242 to leucine 262, leucine 266 to valine 286, and valine 300 to valine 320.

It belongs to the UbiA prenyltransferase family. The cofactor is Mg(2+).

The protein localises to the membrane. It functions in the pathway secondary metabolite biosynthesis; terpenoid biosynthesis. Polyprenyl transferase; part of the gene cluster that mediates the biosynthesis of yanuthone D, a fungal isoprenoid epoxycyclohexenone that acts as an antibiotic against fungi and bacteria. The first step of the pathway is the synthesis of 6-methylsalicylic acid (6-MSA) by the polyketide synthase yanA. 6-MSA is then converted to m-cresol by the decarboxylase yanB. The cytochrome P450 monooxygenase yanC then catalyzes the oxidation of m-cresol to toluquinol. Epoxidation of toluquinol is then performed by the short chain dehydrogenase yanD, with the help of yanE, and a further prenylation by yanG leads to 7-deacetoxyyanuthone A. The next step is the hydroxylation of C-22 of 7-deacetoxyyanuthone A by the cytochrome P450 monooxygenase yanH to yield 22-deacetylyanuthone A. O-Mevalon transferase yanI then attaches mevalon to the hydroxyl group of 22-deacetylyanuthone A to produce yanuthone E. Finally, the FAD-dependent monooxygenase yanF oxidizes the hydroxyl group at C15 of yanuthone E to form yanuthone D. Furthermore, several branching points in the pathway lead to the production of yanuthones F and G from 7-deacetoxyyanuthone A; yanuthones H and I from 22-deacetylyanuthone A; and yanuthone J from yanuthone E. YanG is also involved in the synthesis of yanuthone X1 which does not have 6-methylsalicylic acid (6-MSA) as precursor. This Aspergillus niger (strain ATCC 1015 / CBS 113.46 / FGSC A1144 / LSHB Ac4 / NCTC 3858a / NRRL 328 / USDA 3528.7) protein is Polyprenyl transferase yanG.